The sequence spans 508 residues: DEAD-box ATP-dependent RNA helicase 8 (508 aa).

Residues 1–123 (MDPRARYPPG…LKLPPQDTRY (123 aa)) are disordered. A compositionally biased stretch (low complexity) spans 18–53 (NPNYYNRGPPLQQQHNHHQQQQTSAPHHQQYVQRQP). A compositionally biased stretch (basic residues) spans 54–64 (QQHHHHNHHQQ). Positions 134 to 162 (NEFEDYFLKRELLMGIYEKGFERPSPIQE) match the Q motif motif. A Helicase ATP-binding domain is found at 165–335 (IPIALTGSDI…DKYLPKPYVI (171 aa)). 178–185 (AKNGTGKT) lines the ATP pocket. The DEAD box motif lies at 283–286 (DEAD). In terms of domain architecture, Helicase C-terminal spans 345 to 505 (GITQFYAFVE…PIPPQIDQAI (161 aa)).

This sequence belongs to the DEAD box helicase family. DDX6/DHH1 subfamily.

Its subcellular location is the cytoplasm. It localises to the P-body. The catalysed reaction is ATP + H2O = ADP + phosphate + H(+). In terms of biological role, ATP-dependent RNA helicase involved in mRNA turnover, and more specifically in mRNA decapping. The chain is DEAD-box ATP-dependent RNA helicase 8 from Oryza sativa subsp. japonica (Rice).